The primary structure comprises 272 residues: 3-methyl-2-oxobutanoate hydroxymethyltransferase (272 aa).

Mg(2+) is bound by residues Asp-54 and Asp-93. Residues 54–55 (DS), Asp-93, and Lys-123 each bind 3-methyl-2-oxobutanoate. Glu-125 contributes to the Mg(2+) binding site. Residue Glu-190 is the Proton acceptor of the active site.

It belongs to the PanB family. Homodecamer; pentamer of dimers. Mg(2+) is required as a cofactor.

It is found in the cytoplasm. The enzyme catalyses 3-methyl-2-oxobutanoate + (6R)-5,10-methylene-5,6,7,8-tetrahydrofolate + H2O = 2-dehydropantoate + (6S)-5,6,7,8-tetrahydrofolate. The protein operates within cofactor biosynthesis; (R)-pantothenate biosynthesis; (R)-pantoate from 3-methyl-2-oxobutanoate: step 1/2. In terms of biological role, catalyzes the reversible reaction in which hydroxymethyl group from 5,10-methylenetetrahydrofolate is transferred onto alpha-ketoisovalerate to form ketopantoate. This Tropheryma whipplei (strain Twist) (Whipple's bacillus) protein is 3-methyl-2-oxobutanoate hydroxymethyltransferase.